Consider the following 54-residue polypeptide: Large ribosomal subunit protein bL33B (54 aa).

The protein belongs to the bacterial ribosomal protein bL33 family.

This Mycolicibacterium vanbaalenii (strain DSM 7251 / JCM 13017 / BCRC 16820 / KCTC 9966 / NRRL B-24157 / PYR-1) (Mycobacterium vanbaalenii) protein is Large ribosomal subunit protein bL33B.